The primary structure comprises 167 residues: Aphrodisin (167 aa).

The first 16 residues, 1–16 (MVKILLLALVFSLAHA), serve as a signal peptide directing secretion. The residue at position 17 (Gln17) is a Pyrrolidone carboxylic acid. 2 cysteine pairs are disulfide-bonded: Cys54–Cys58 and Cys73–Cys165. Residues Asn57 and Asn85 are each glycosylated (N-linked (GlcNAc...) asparagine).

This sequence belongs to the calycin superfamily. Lipocalin family. In terms of tissue distribution, expressed in the vagina, uterus, and Bartholin's glands of female hamsters. Secreted in vaginal discharge.

It localises to the secreted. Acts as an aphrodisiac pheromone, reliably eliciting copulatory behavior from male hamster. The sequence is that of Aphrodisin from Cricetus cricetus (Black-bellied hamster).